Reading from the N-terminus, the 272-residue chain is Short-chain dehydrogenase/reductase iacC (272 aa).

Residues isoleucine 13, aspartate 59, and asparagine 88 each contribute to the NADP(+) site. Catalysis depends on proton donor residues serine 150 and tyrosine 169. NADP(+)-binding residues include tyrosine 169, lysine 173, and valine 202. Lysine 173 serves as the catalytic Lowers pKa of active site Tyr.

It belongs to the short-chain dehydrogenases/reductases (SDR) family.

The protein operates within secondary metabolite biosynthesis. Functionally, short-chain dehydrogenase/reductase; part of the gene cluster that mediates the biosynthesis of iso-A82775C, a enylepoxycyclohexane and biosynthetic precursor of the chloropestolide anticancer natural products. Within the cluster, the prenyltransferase iacE prenylates siccayne to generate pestalodiol E, using dimethylallyl diphosphate (DMAPP) as cosubstrate. The probable oxidoreductase iacF is then involved in the epoxidation of pestalodiol F to pestalodiol F, which is further converted to pestalofone A by the short-chain dehydrogenase/reductase iacG. Iso-A82775C is subsequently generated from pestalofone A by the short-chain dehydrogenase/reductase iacC. Iso-A82775C is further condensed with maldoxin via a Diels-Alder reaction to produce the anticancer natural products chloropestolides A to E. This is Short-chain dehydrogenase/reductase iacC from Pestalotiopsis fici (strain W106-1 / CGMCC3.15140).